A 262-amino-acid chain; its full sequence is Ribosomal RNA small subunit methyltransferase A (262 aa).

6 residues coordinate S-adenosyl-L-methionine: Asn12, Leu14, Gly38, Glu60, Asp83, and Asn102.

Belongs to the class I-like SAM-binding methyltransferase superfamily. rRNA adenine N(6)-methyltransferase family. RsmA subfamily.

Its subcellular location is the cytoplasm. It catalyses the reaction adenosine(1518)/adenosine(1519) in 16S rRNA + 4 S-adenosyl-L-methionine = N(6)-dimethyladenosine(1518)/N(6)-dimethyladenosine(1519) in 16S rRNA + 4 S-adenosyl-L-homocysteine + 4 H(+). Its function is as follows. Specifically dimethylates two adjacent adenosines (A1518 and A1519) in the loop of a conserved hairpin near the 3'-end of 16S rRNA in the 30S particle. May play a critical role in biogenesis of 30S subunits. The chain is Ribosomal RNA small subunit methyltransferase A from Pelagibacter ubique (strain HTCC1062).